We begin with the raw amino-acid sequence, 186 residues long: ATP synthase subunit delta (186 aa).

This sequence belongs to the ATPase delta chain family. As to quaternary structure, F-type ATPases have 2 components, F(1) - the catalytic core - and F(0) - the membrane proton channel. F(1) has five subunits: alpha(3), beta(3), gamma(1), delta(1), epsilon(1). F(0) has three main subunits: a(1), b(2) and c(10-14). The alpha and beta chains form an alternating ring which encloses part of the gamma chain. F(1) is attached to F(0) by a central stalk formed by the gamma and epsilon chains, while a peripheral stalk is formed by the delta and b chains.

The protein localises to the cell inner membrane. In terms of biological role, f(1)F(0) ATP synthase produces ATP from ADP in the presence of a proton or sodium gradient. F-type ATPases consist of two structural domains, F(1) containing the extramembraneous catalytic core and F(0) containing the membrane proton channel, linked together by a central stalk and a peripheral stalk. During catalysis, ATP synthesis in the catalytic domain of F(1) is coupled via a rotary mechanism of the central stalk subunits to proton translocation. Its function is as follows. This protein is part of the stalk that links CF(0) to CF(1). It either transmits conformational changes from CF(0) to CF(1) or is implicated in proton conduction. The sequence is that of ATP synthase subunit delta from Fuscovulum blasticum (Rhodobacter blasticus).